A 330-amino-acid polypeptide reads, in one-letter code: Daunorubicin/doxorubicin resistance ATP-binding protein DrrA (330 aa).

Residues 9–239 enclose the ABC transporter domain; it reads IETSGLVKVY…LGSNVLRLRL (231 aa). 41–48 is an ATP binding site; the sequence is GPNGAGKS.

It belongs to the ABC transporter superfamily. Drug exporter-1 (DrugE1) (TC 3.A.1.105) family. As to quaternary structure, the complex is composed of two ATP-binding proteins (DrrA) and two transmembrane proteins (DrrB).

The protein localises to the cell membrane. It catalyses the reaction daunorubicin(in) + ATP + H2O = daunorubicin(out) + ADP + phosphate + H(+). Its function is as follows. Part of the ABC transporter complex DrrAB involved in daunorubicin and doxorubicin resistance. Responsible for energy coupling to the transport system. Binds ATP or GTP. This Streptomyces peucetius protein is Daunorubicin/doxorubicin resistance ATP-binding protein DrrA (drrA).